Reading from the N-terminus, the 293-residue chain is MDLGKVITAMVTPIHPEKDKVCKKRIHHLVNHLIENGSDGLVIAGTTGESPTLSHDEKIKLFRQVIETNDGRAKLIAGTGSNNTAETIAFTKEVAELGGIDAVLIVAPYYNKPNQDGLYAHFAAVAEASDLPVVIYNIPGRSVVNIEPETIIRLAALPNIVGVKESSGNLDNISKIIAETSDDFQVYSGDDSLTLPILAVGGNGVISVASHVVGNEMQEMIQAFERGEVQKAAQIHRELLPLMNGLFSVPNPAPTKYLLNQQGISVGPVRLPLVDLNAEQGTKLQAILEGLSK.

T47 is a pyruvate binding site. Y136 serves as the catalytic Proton donor/acceptor. K164 (schiff-base intermediate with substrate) is an active-site residue. I206 is a pyruvate binding site.

The protein belongs to the DapA family. In terms of assembly, homotetramer; dimer of dimers.

The protein localises to the cytoplasm. The enzyme catalyses L-aspartate 4-semialdehyde + pyruvate = (2S,4S)-4-hydroxy-2,3,4,5-tetrahydrodipicolinate + H2O + H(+). The protein operates within amino-acid biosynthesis; L-lysine biosynthesis via DAP pathway; (S)-tetrahydrodipicolinate from L-aspartate: step 3/4. Catalyzes the condensation of (S)-aspartate-beta-semialdehyde [(S)-ASA] and pyruvate to 4-hydroxy-tetrahydrodipicolinate (HTPA). The protein is 4-hydroxy-tetrahydrodipicolinate synthase of Listeria monocytogenes serotype 4a (strain HCC23).